The chain runs to 173 residues: Peptide methionine sulfoxide reductase MsrA (173 aa).

The active site involves C10.

Belongs to the MsrA Met sulfoxide reductase family.

The catalysed reaction is L-methionyl-[protein] + [thioredoxin]-disulfide + H2O = L-methionyl-(S)-S-oxide-[protein] + [thioredoxin]-dithiol. The enzyme catalyses [thioredoxin]-disulfide + L-methionine + H2O = L-methionine (S)-S-oxide + [thioredoxin]-dithiol. Has an important function as a repair enzyme for proteins that have been inactivated by oxidation. Catalyzes the reversible oxidation-reduction of methionine sulfoxide in proteins to methionine. The sequence is that of Peptide methionine sulfoxide reductase MsrA from Acinetobacter baumannii (strain AB307-0294).